The sequence spans 249 residues: Phosphate import ATP-binding protein PstB 2 (249 aa).

In terms of domain architecture, ABC transporter spans 4–244 (FEVTHLNLFY…PKDHRTQGYV (241 aa)). 36-43 (GPSGCGKS) contributes to the ATP binding site.

It belongs to the ABC transporter superfamily. Phosphate importer (TC 3.A.1.7) family. In terms of assembly, the complex is composed of two ATP-binding proteins (PstB), two transmembrane proteins (PstC and PstA) and a solute-binding protein (PstS).

It localises to the cell inner membrane. The catalysed reaction is phosphate(out) + ATP + H2O = ADP + 2 phosphate(in) + H(+). In terms of biological role, part of the ABC transporter complex PstSACB involved in phosphate import. Responsible for energy coupling to the transport system. The chain is Phosphate import ATP-binding protein PstB 2 from Shewanella oneidensis (strain ATCC 700550 / JCM 31522 / CIP 106686 / LMG 19005 / NCIMB 14063 / MR-1).